Consider the following 140-residue polypeptide: Ubiquitin-like protein ATG12 (140 aa).

Residues 1 to 50 (MAEEPQSVLQLPTSIAAGGEGLTDVSPETTTPEPPSSAAVSPGTEEPAGD) are disordered. Low complexity predominate over residues 25 to 42 (VSPETTTPEPPSSAAVSP). Residue Gly-140 forms a Glycyl lysine isopeptide (Gly-Lys) (interchain with K-130 in ATG5) linkage.

It belongs to the ATG12 family. As to quaternary structure, forms a conjugate with ATG5. Part of the minor complex composed of 4 sets of ATG12-ATG5 and ATG16L1 (400 kDa); this complex interacts with ATG3 leading to disruption of ATG7 interaction and promotion of ATG8-like proteins lipidation. Forms an 800-kDa complex composed of ATG12-ATG5 and ATG16L2. Interacts with DHX58/RIG-1, IFIH1/MDA5 and MAVS/IPS-1 in monomeric form as well as in ATG12-ATG5 conjugate. The interaction with MAVS is further enhanced upon vesicular stomatitis virus (VSV) infection. Interacts with ATG3; this interaction is essential for phosphatidylethanolamine (PE)-conjugated ATG8-like proteins formation. Interacts with ATG7. Interacts with ATG10. The ATG12-ATG5 conjugate interacts with RAB33A; this interaction is bridged by ATG16L1 and promotes ATG12-ATG5-ATG16L1 complex recruitment to phagophores. Interacts with TECPR1. Interacts with SH3BGRL. The ATG12-ATG5 conjugate interacts with PDCD6IP (via the BRO1 domain); this interaction is bridged by ATG12 and promotes multiple PDCD6IP-mediated functions such as endolysosomal trafficking, macroautophagy and exosome biogenesis. Post-translationally, acetylated by EP300. Ubiquitous.

The protein resides in the cytoplasm. It is found in the preautophagosomal structure membrane. Ubiquitin-like protein involved in autophagy vesicles formation. Conjugation with ATG5 through a ubiquitin-like conjugating system involving also ATG7 as an E1-like activating enzyme and ATG10 as an E2-like conjugating enzyme, is essential for its function. The ATG12-ATG5 conjugate acts as an E3-like enzyme which is required for lipidation of ATG8 family proteins and their association to the vesicle membranes. As part of the ATG8 conjugation system with ATG5 and ATG16L1, required for recruitment of LRRK2 to stressed lysosomes and induction of LRRK2 kinase activity in response to lysosomal stress. In terms of biological role, (Microbial infection) May act as a proviral factor. In association with ATG5, negatively regulates the innate antiviral immune response by impairing the type I IFN production pathway upon vesicular stomatitis virus (VSV) infection. Required for the translation of incoming hepatitis C virus (HCV) RNA and, thereby, for the initiation of HCV replication, but not required once infection is established. This chain is Ubiquitin-like protein ATG12, found in Homo sapiens (Human).